Here is a 177-residue protein sequence, read N- to C-terminus: Voltage-dependent L-type calcium channel subunit alpha-1C (177 aa).

Residues 27 to 45 form a helical membrane-spanning segment; it reads ITFFRLFRVMRLVKLLSRG. Residues 64–84 form a helical membrane-spanning segment; sequence YVALLIVMLFFIYAVIGMQVF. N90 carries an N-linked (GlcNAc...) asparagine glycan. The segment at residues 107 to 125 is an intramembrane region (pore-forming); that stretch reads AVLLLFRCATGEAWQEIML. The Selectivity filter of repeat IV signature appears at 116 to 119; that stretch reads TGEA. An intrachain disulfide couples C133 to C149. N-linked (GlcNAc...) asparagine glycosylation is present at N141. A helical transmembrane segment spans residues 154–177; that stretch reads AVFYFISFYMLCAFLIIDLFVAVI.

Belongs to the calcium channel alpha-1 subunit (TC 1.A.1.11) family. CACNA1C subfamily. In terms of assembly, component of a calcium channel complex consisting of a pore-forming alpha subunit (CACNA1C) and ancillary beta, gamma and delta subunits. The channel complex contains alpha, beta, gamma and delta subunits in a 1:1:1:1 ratio, i.e. it contains only one of each type of subunit. CACNA1C channel activity is modulated by ancillary subunits, such as CACNB2, CACNB3, CACNA2D1 and CACNA2D4. In terms of processing, phosphorylation by PKA activates the channel.

Its subcellular location is the cell membrane. The protein localises to the perikaryon. It is found in the postsynaptic density membrane. It localises to the cell projection. The protein resides in the dendrite. Its subcellular location is the sarcolemma. The protein localises to the T-tubule. The enzyme catalyses Ca(2+)(in) = Ca(2+)(out). Its activity is regulated as follows. Inhibited by dihydropyridines (DHP), such as isradipine. Channel activity is regulated by Ca(2+) and calmodulin. In terms of biological role, pore-forming, alpha-1C subunit of the voltage-gated calcium channel that gives rise to L-type calcium currents. Mediates influx of calcium ions into the cytoplasm, and thereby triggers calcium release from the sarcoplasm. Plays an important role in excitation-contraction coupling in the heart. Required for normal heart development and normal regulation of heart rhythm. Required for normal contraction of smooth muscle cells in blood vessels and in the intestine. Essential for normal blood pressure regulation via its role in the contraction of arterial smooth muscle cells. Long-lasting (L-type) calcium channels belong to the 'high-voltage activated' (HVA) group. The polypeptide is Voltage-dependent L-type calcium channel subunit alpha-1C (CACNA1C) (Gallus gallus (Chicken)).